The chain runs to 311 residues: MTRHFLVDTDLNPQEQTEVLDLALQLKRNPYLRQPFAGVGAGRKTVAVIFDKTSTRTRVSFAAGISELGGTPLIIGAGESQLGHKESIADTAKVLERMVATIVWRTFAQVGLEEMAANSKVPVINALSDDYHPCQLLADLLTIKEHKGGLKGLTMTYLGDGANNMANSYLLAGVTAGMHVRIAAPAEYQPDESVVRDALNRADETGGSVLVTTDPRLAASGADVLATDTWVSMGQEDEKASRAEIFKPYALDAAALALAAADAVVLHCLPAYRGYEIAAEVIDGPQSVVWDEAENRLHAQKALMAWLVERS.

Carbamoyl phosphate-binding positions include S54 to T57, Q81, R105, and H132 to Q135. L-ornithine contacts are provided by residues N164, D228, and S232–M233. Carbamoyl phosphate-binding positions include C268–L269 and R296.

Belongs to the aspartate/ornithine carbamoyltransferase superfamily. OTCase family.

The protein localises to the cytoplasm. The enzyme catalyses carbamoyl phosphate + L-ornithine = L-citrulline + phosphate + H(+). Its pathway is amino-acid biosynthesis; L-arginine biosynthesis; L-arginine from L-ornithine and carbamoyl phosphate: step 1/3. Its function is as follows. Reversibly catalyzes the transfer of the carbamoyl group from carbamoyl phosphate (CP) to the N(epsilon) atom of ornithine (ORN) to produce L-citrulline. The sequence is that of Ornithine carbamoyltransferase from Renibacterium salmoninarum (strain ATCC 33209 / DSM 20767 / JCM 11484 / NBRC 15589 / NCIMB 2235).